Here is a 371-residue protein sequence, read N- to C-terminus: Protein STRICTOSIDINE SYNTHASE-LIKE 6 (371 aa).

The first 21 residues, 1–21, serve as a signal peptide directing secretion; it reads MPVFLSSRFLFFCIIVPLLIS. N-linked (GlcNAc...) asparagine glycans are attached at residues N101 and N137. Y303 bears the Phosphotyrosine mark.

The protein belongs to the strictosidine synthase family.

The protein resides in the vacuole. The chain is Protein STRICTOSIDINE SYNTHASE-LIKE 6 from Arabidopsis thaliana (Mouse-ear cress).